We begin with the raw amino-acid sequence, 263 residues long: 5'-nucleotidase SurE (263 aa).

The a divalent metal cation site is built by D8, D9, S40, and N98.

The protein belongs to the SurE nucleotidase family. The cofactor is a divalent metal cation.

The protein localises to the cytoplasm. It carries out the reaction a ribonucleoside 5'-phosphate + H2O = a ribonucleoside + phosphate. Its function is as follows. Nucleotidase that shows phosphatase activity on nucleoside 5'-monophosphates. In Gloeobacter violaceus (strain ATCC 29082 / PCC 7421), this protein is 5'-nucleotidase SurE.